Consider the following 105-residue polypeptide: Iron-sulfur cluster assembly protein CyaY (105 aa).

It belongs to the frataxin family.

In terms of biological role, involved in iron-sulfur (Fe-S) cluster assembly. May act as a regulator of Fe-S biogenesis. This chain is Iron-sulfur cluster assembly protein CyaY, found in Psychromonas ingrahamii (strain DSM 17664 / CCUG 51855 / 37).